A 101-amino-acid chain; its full sequence is Small ribosomal subunit protein uS14 (101 aa).

Residues 1 to 10 (MAKKSSIEKN) show a composition bias toward basic and acidic residues. Residues 1–25 (MAKKSSIEKNNRRKKMAKNAAPKRE) are disordered.

Belongs to the universal ribosomal protein uS14 family. In terms of assembly, part of the 30S ribosomal subunit. Contacts proteins S3 and S10.

Binds 16S rRNA, required for the assembly of 30S particles and may also be responsible for determining the conformation of the 16S rRNA at the A site. This chain is Small ribosomal subunit protein uS14, found in Rhodopseudomonas palustris (strain BisA53).